Consider the following 156-residue polypeptide: MSLNATLFAQLVVFFILAWFTMKFVWPPITKALDERASKIADGLAAADRAKTELASANKRVEEQLASVRDENARRLADAEKRALAIVEDAKKRATEEGSKIVAAAKSEAEQQLVQARESLREQVAALAVKGAEQILKREVNAGVHADLLSRLKTEL.

Residues 7–27 traverse the membrane as a helical segment; the sequence is LFAQLVVFFILAWFTMKFVWP.

It belongs to the ATPase B chain family. In terms of assembly, F-type ATPases have 2 components, F(1) - the catalytic core - and F(0) - the membrane proton channel. F(1) has five subunits: alpha(3), beta(3), gamma(1), delta(1), epsilon(1). F(0) has four main subunits: a(1), b(2) and c(10-14). The alpha and beta chains form an alternating ring which encloses part of the gamma chain. F(1) is attached to F(0) by a central stalk formed by the gamma and epsilon chains, while a peripheral stalk is formed by the delta and b chains.

Its subcellular location is the cell inner membrane. Functionally, f(1)F(0) ATP synthase produces ATP from ADP in the presence of a proton or sodium gradient. F-type ATPases consist of two structural domains, F(1) containing the extramembraneous catalytic core and F(0) containing the membrane proton channel, linked together by a central stalk and a peripheral stalk. During catalysis, ATP synthesis in the catalytic domain of F(1) is coupled via a rotary mechanism of the central stalk subunits to proton translocation. In terms of biological role, component of the F(0) channel, it forms part of the peripheral stalk, linking F(1) to F(0). The sequence is that of ATP synthase subunit b from Methylibium petroleiphilum (strain ATCC BAA-1232 / LMG 22953 / PM1).